A 349-amino-acid chain; its full sequence is Microfibril-associated glycoprotein 3 (349 aa).

An N-terminal signal peptide occupies residues 1–21; the sequence is MKLHHCLSFLLVVTLVPAALS. Residues 22–139 are Extracellular-facing; it reads LEDVAPLGAN…TLRVIFTSGD (118 aa). N-linked (GlcNAc...) asparagine glycosylation is found at N31, N36, N63, and N103. The Ig-like C2-type domain occupies 41 to 130; it reads PSFELSAGSY…SPARASYSVT (90 aa). The cysteines at positions 68 and 117 are disulfide-linked. Residues 140–160 form a helical membrane-spanning segment; it reads MSVYYMVVCLIAFTITLILNV. Residues 161–349 are Cytoplasmic-facing; it reads TRLCLMSTHL…EGSIHHRVSI (189 aa). A disordered region spans residues 280-349; the sequence is NPELGRSNSP…EGSIHHRVSI (70 aa). Residues 311–331 show a composition bias toward polar residues; it reads VHLQSETKSIGTDSQDSSHFS.

Post-translationally, glycosylated.

The protein resides in the cell membrane. Component of the elastin-associated microfibrils. The protein is Microfibril-associated glycoprotein 3 (Mfap3) of Mus musculus (Mouse).